The following is a 274-amino-acid chain: Mitochondrial outer membrane protein porin 4 (274 aa).

Gly-2 carries the N-acetylglycine modification. Phosphoserine is present on Ser-76.

The protein belongs to the eukaryotic mitochondrial porin (TC 1.B.8.1) family. Widely expressed.

The protein resides in the cell membrane. Its subcellular location is the mitochondrion outer membrane. Functionally, forms a channel through the mitochondrial outer membrane that allows diffusion of small hydrophilic molecules. The channel adopts an open conformation at low or zero membrane potential and a closed conformation at potentials above 30-40 mV. The open state has a weak anion selectivity whereas the closed state is cation-selective. Involved in plant growth and development at the vegetative and reproductive stages. Is important for leaf and pollen development and mitochondrial membrane potential steady state. May be involved in disease resistance. This is Mitochondrial outer membrane protein porin 4 (VDAC4) from Arabidopsis thaliana (Mouse-ear cress).